The chain runs to 413 residues: Aminopeptidase 2 (413 aa).

A divalent metal cation is bound by residues glutamate 250, glutamate 316, glutamate 340, histidine 345, histidine 378, and aspartate 380.

It belongs to the peptidase M29 family. Homodimer. Co(2+) serves as cofactor. Requires Zn(2+) as cofactor. Mg(2+) is required as a cofactor.

Its function is as follows. Broad specificity metal-dependent exopeptidase, releasing all N-terminal amino acids. This Geobacillus stearothermophilus (Bacillus stearothermophilus) protein is Aminopeptidase 2.